We begin with the raw amino-acid sequence, 182 residues long: Ribosome-recycling factor (182 aa).

The protein belongs to the RRF family.

Its subcellular location is the cytoplasm. Its function is as follows. Responsible for the release of ribosomes from messenger RNA at the termination of protein biosynthesis. May increase the efficiency of translation by recycling ribosomes from one round of translation to another. This Synechococcus sp. (strain CC9605) protein is Ribosome-recycling factor.